Consider the following 163-residue polypeptide: MLNMKSFALLMLFATLVGVTIAYDPNGKCGRQYGKCRAGQCCSQYGYCGSGSKYCAHNTPLSEIEPTAAGQCYRGRCSGGLCCSKYGYCGSGPAYCGLGMCQGSCLPDMPNHPAQIQARTEAAQAEAQAEAYNQANEAAQVEAYYQAQTQAQPQVEPAVTKAP.

A signal peptide spans 1-22; that stretch reads MLNMKSFALLMLFATLVGVTIA. Chitin-binding type-1 domains lie at 26-66 and 69-107; these read NGKC…EIEP and AGQC…SCLP. Disulfide bonds link Cys29–Cys42, Cys36–Cys48, and Cys41–Cys55. A propeptide spanning residues 58-67 is cleaved from the precursor; the sequence is NTPLSEIEPT. 4 disulfide bridges follow: Cys72/Cys83, Cys77/Cys89, Cys82/Cys96, and Cys101/Cys105. Residues 100-163 constitute a propeptide that is removed on maturation; that stretch reads MCQGSCLPDM…QVEPAVTKAP (64 aa).

In terms of tissue distribution, expressed in roots, flowers, stem and leaves.

In terms of biological role, antimicrobial peptide. The polypeptide is Antimicrobial peptide 2 (Stellaria media (Common chickweed)).